A 526-amino-acid chain; its full sequence is MTDLEKPSITGHMFDVVVIGGGISGLAAAKLLSEYKINVLVLEARDRVGGRTYTVRNEHVKWVDVGGAYVGPTQNRILRLSKELGIETYKVNVNERLVQYVKGKTYPFRGAFPPVWNPLAYLDYNNLWRTMDDMGKEIPVDAPWQARHAEEWDKITMKDLIDKICWTKTAREFAYLFVNINVTSEPHEVSALWFLWYVRQCGGTSRIFSVTNGGQERKFVGGSGQISEQIMVLLGDKVKLSSPVTYIDQTDDNIIIETLNHEHYECKYVISAIPPVLTAKIHFKPELPPERNQLIQRLPMGAVIKCMVYYKEAFWKKKDYCGCMIIEDEEAPISITLDDTKPDGSMPAIMGFILARKAERLAKLHKDIRKRKICELYAKVLGSQEALSPVHYEEKNWCEEQYSGGCYTAYFPPGIMTLYGRVIRQPVGRIYFAGTETATQWSGYMEGAVEAGERAAREVLNALGKVAKKDIWVQEPESKDVPALEITHTFLERNLPSVPGLLKITGFSTSVALLCFVLYKFKQPQS.

An N-acetylmethionine modification is found at methionine 1. Residues 1 to 497 (MTDLEKPSIT…HTFLERNLPS (497 aa)) are Cytoplasmic-facing. Serine 383 is subject to Phosphoserine. Cysteine 406 is modified (S-8alpha-FAD cysteine). Residues 498 to 518 (VPGLLKITGFSTSVALLCFVL) traverse the membrane as a helical; Anchor for type IV membrane protein segment. Residues 519–526 (YKFKQPQS) lie on the Mitochondrial intermembrane side of the membrane. The interaction with membrane phospholipid headgroups stretch occupies residues 520–522 (KFK).

It belongs to the flavin monoamine oxidase family. Monomer, homo- or heterodimer (containing two subunits of similar size). Each subunit contains a covalently bound flavin. Enzymatically active as monomer. FAD serves as cofactor.

It is found in the mitochondrion outer membrane. The enzyme catalyses a secondary aliphatic amine + O2 + H2O = a primary amine + an aldehyde + H2O2. The catalysed reaction is a primary methyl amine + O2 + H2O = an aldehyde + H2O2 + NH4(+). It catalyses the reaction serotonin + O2 + H2O = (5-hydroxyindol-3-yl)acetaldehyde + H2O2 + NH4(+). It carries out the reaction (R)-adrenaline + O2 + H2O = (R)-3,4-dihydroxymandelaldehyde + methylamine + H2O2. The enzyme catalyses dopamine + O2 + H2O = 3,4-dihydroxyphenylacetaldehyde + H2O2 + NH4(+). The catalysed reaction is tyramine + O2 + H2O = (4-hydroxyphenyl)acetaldehyde + H2O2 + NH4(+). It catalyses the reaction (R)-noradrenaline + O2 + H2O = (R)-3,4-dihydroxymandelaldehyde + H2O2 + NH4(+). It carries out the reaction kynuramine + O2 + H2O = 3-(2-aminophenyl)-3-oxopropanal + H2O2 + NH4(+). The enzyme catalyses tryptamine + O2 + H2O = indole-3-acetaldehyde + H2O2 + NH4(+). The catalysed reaction is 2-phenylethylamine + O2 + H2O = 2-phenylacetaldehyde + H2O2 + NH4(+). In terms of biological role, catalyzes the oxidative deamination of biogenic and xenobiotic amines and has important functions in the metabolism of neuroactive and vasoactive amines in the central nervous system and peripheral tissues. Preferentially oxidizes serotonin. Also catalyzes the oxidative deamination of kynuramine to 3-(2-aminophenyl)-3-oxopropanal that can spontaneously condense to 4-hydroxyquinoline. This chain is Amine oxidase [flavin-containing] A, found in Mus musculus (Mouse).